The chain runs to 646 residues: Amyloid beta A4 precursor protein-binding family B member 1-interacting protein (646 aa).

Positions 82–141 (FATERDTSKGSVPVAPAPSKPQSNFSLPASFDSSKPATSSNSIAAPPPPPAFKPSKEEEE) are disordered. The span at 101–116 (KPQSNFSLPASFDSSK) shows a compositional bias: polar residues. Residues 162–248 (KKLVVKVEIT…NKVLFQEKKH (87 aa)) enclose the Ras-associating domain. Residues 292–401 (VPDLEGVLYL…WVTGIRVAKY (110 aa)) enclose the PH domain. The disordered stretch occupies residues 420-646 (ASWANRTIQA…NAMQKKRTQP (227 aa)). Residues 429–445 (ASSTASTPSPTPKAKAA) show a composition bias toward low complexity. Pro residues-rich tracts occupy residues 465 to 500 (LPPP…PPVP), 509 to 536 (FPPP…PPPE), 560 to 577 (LPPP…PPPA), and 584 to 598 (APPP…PAPA).

The protein belongs to the MRL family.

Its subcellular location is the cell membrane. It is found in the cytoplasm. It localises to the cytoskeleton. In terms of biological role, appears to function in the signal transduction from Ras activation to actin cytoskeletal remodeling. The chain is Amyloid beta A4 precursor protein-binding family B member 1-interacting protein (apbb1ip) from Danio rerio (Zebrafish).